Consider the following 427-residue polypeptide: 3-phosphoshikimate 1-carboxyvinyltransferase (427 aa).

Residues Lys20, Ser21, and Arg25 each contribute to the 3-phosphoshikimate site. Lys20 is a phosphoenolpyruvate binding site. Phosphoenolpyruvate is bound by residues Gly92 and Arg120. The 3-phosphoshikimate site is built by Ser166, Gln168, Asp312, and Lys339. Residue Gln168 coordinates phosphoenolpyruvate. Asp312 (proton acceptor) is an active-site residue. Positions 343 and 385 each coordinate phosphoenolpyruvate.

It belongs to the EPSP synthase family. As to quaternary structure, monomer.

Its subcellular location is the cytoplasm. The catalysed reaction is 3-phosphoshikimate + phosphoenolpyruvate = 5-O-(1-carboxyvinyl)-3-phosphoshikimate + phosphate. It functions in the pathway metabolic intermediate biosynthesis; chorismate biosynthesis; chorismate from D-erythrose 4-phosphate and phosphoenolpyruvate: step 6/7. Catalyzes the transfer of the enolpyruvyl moiety of phosphoenolpyruvate (PEP) to the 5-hydroxyl of shikimate-3-phosphate (S3P) to produce enolpyruvyl shikimate-3-phosphate and inorganic phosphate. This Streptococcus equi subsp. zooepidemicus (strain MGCS10565) protein is 3-phosphoshikimate 1-carboxyvinyltransferase.